The sequence spans 262 residues: Small ribosomal subunit protein uS2 (262 aa).

The tract at residues 225 to 262 (KQGEQLTEEAKPEDKEDEKGQAEEKEVKEENNSANKEE) is disordered. A compositionally biased stretch (basic and acidic residues) spans 232–262 (EEAKPEDKEDEKGQAEEKEVKEENNSANKEE).

It belongs to the universal ribosomal protein uS2 family.

The protein is Small ribosomal subunit protein uS2 of Halothermothrix orenii (strain H 168 / OCM 544 / DSM 9562).